A 374-amino-acid chain; its full sequence is Putative glutamate--cysteine ligase 2 (374 aa).

Belongs to the glutamate--cysteine ligase type 2 family. YbdK subfamily.

It carries out the reaction L-cysteine + L-glutamate + ATP = gamma-L-glutamyl-L-cysteine + ADP + phosphate + H(+). Functionally, ATP-dependent carboxylate-amine ligase which exhibits weak glutamate--cysteine ligase activity. The chain is Putative glutamate--cysteine ligase 2 from Acidovorax ebreus (strain TPSY) (Diaphorobacter sp. (strain TPSY)).